Reading from the N-terminus, the 220-residue chain is MSSFSKEARQVHEALVKHGLENPFNMDPENGLLDAATRRSHIEKHITQIMELLNLDLRDDSLSKTPSRIASMYVDEIFLGLDYAHFPEITLIQNKMQVDEMITVHDISLSSTCEHHFASIDGKATVAYIPKDYIIGLSKINRVVQFFSQRPQVQERLTQQIILALQTLLATENVAVSIDATHYCVKARGICDRSSVTRTTSLRGLFKSSQNTRQEFLHIC.

3 residues coordinate Zn(2+): Cys-113, His-116, and Cys-184.

It belongs to the GTP cyclohydrolase I family. As to quaternary structure, homomer.

The catalysed reaction is GTP + H2O = 7,8-dihydroneopterin 3'-triphosphate + formate + H(+). Its pathway is cofactor biosynthesis; 7,8-dihydroneopterin triphosphate biosynthesis; 7,8-dihydroneopterin triphosphate from GTP: step 1/1. This chain is GTP cyclohydrolase 1, found in Hamiltonella defensa subsp. Acyrthosiphon pisum (strain 5AT).